A 750-amino-acid chain; its full sequence is Rho GTPase-activating protein 9 (750 aa).

One can recognise an SH3 domain in the interval 22–88; that stretch reads PRGSQLCALY…PAAYMIEESI (67 aa). 2 disordered regions span residues 120 to 187 and 242 to 319; these read ALPS…LMSE and WKPP…LLDD. A compositionally biased stretch (polar residues) spans 163-180; that stretch reads RSLSQEDLPSEASASTAG. The WW domain maps to 213–247; it reads LQRLDAWEQHLDPNSGRCFYINSLTGCKSWKPPRR. 2 stretches are compositionally biased toward polar residues: residues 251 to 270 and 291 to 300; these read ETNP…NDVL and GSLSLSQRTS. Low complexity predominate over residues 301–317; the sequence is QLDPPALQAPRPLPQLL. The region spanning 322-435 is the PH domain; sequence EVEKSGLLNM…WHRALRTVIE (114 aa). Lipid binding stretches follow at residues 342 to 345, 397 to 399, and 432 to 669; these read RKNW, SSR, and TVIE…CLSQ. Residues 446–462 show a composition bias toward basic and acidic residues; sequence EAPTGRDQGSGDRENPL. The disordered stretch occupies residues 446–488; it reads EAPTGRDQGSGDRENPLELRLSGSGPAELSAGEDEEEESELVS. S475 is subject to Phosphoserine. The span at 476–485 shows a compositional bias: acidic residues; it reads AGEDEEEESE. S500 is modified (phosphoserine). Residues 542-749 form the Rho-GAP domain; sequence CQLESLCQRE…LMLTNFTSLF (208 aa).

Interacts with FASLG. In terms of tissue distribution, predominantly expressed in peripheral blood leukocytes, spleen, and thymus.

In terms of biological role, GTPase activator for the Rho-type GTPases by converting them to an inactive GDP-bound state. Has a substantial GAP activity toward CDC42 and RAC1 and less toward RHOA. Has a role in regulating adhesion of hematopoietic cells to the extracellular matrix. Binds phosphoinositides, and has the highest affinity for phosphatidylinositol 3,4,5-trisphosphate, followed by phosphatidylinositol 3,4-bisphosphate and phosphatidylinositol 4,5-bisphosphate. This Homo sapiens (Human) protein is Rho GTPase-activating protein 9 (ARHGAP9).